The chain runs to 640 residues: Paramyosin, short form (640 aa).

Nonhelical region regions lie at residues 1–122 (MALA…PDTV) and 420–640 (KLEQ…TITE). Residues 123 to 619 (VERSRQRRRR…IIRAKHRTFV (497 aa)) are a coiled coil.

It belongs to the paramyosin family. Phosphorylated. Found in all adult muscle tissues except in indirect flight muscles and a set of temporary abdominal muscles. Not detected in larval muscle.

It is found in the cytoplasm. The protein localises to the myofibril. Its function is as follows. Paramyosin is a major structural component of many thick filaments isolated from invertebrate muscles. This chain is Paramyosin, short form (Prm), found in Drosophila melanogaster (Fruit fly).